Reading from the N-terminus, the 880-residue chain is MTDQRPRAESRSLTAPSLIGTNGHFASVGDAAHDPKAYEHGVQVIDEEKQFNPNLSKYLSLENVANAGFNYHLISVFGSQSTGKSTLLNHLFGTQFSVMSDRERRQTTKGIWMSKNKTKHEDPNARMADNILVMDVEGTDGRERGEDQDFERKSALFALATSEVLIVNIWEHQVGLYQGANMGLLKTVFEVNLQLFLKDKNTTHRSLLFFVIRDFMGTTPLKNLEITLLEDLSRIWASLSKPQGLERSTIHDYFDFAFYGLPHKGYKPEEFAAEAKKLGSRFREGRRDRKEQLIGASIESGVFLPEYHRRIPADGFAHYAEGIWDQIVNNKDLDLPTQQELLAQFRCDEILREVLVAFDEAIVPFEEKQAAGVRAGEPTILGGLGPAMRGARTKAVKNFETEASRYHKGVYQRKRTELEGKIDTRLKALFQGQLNAAHKSGVKDFSDAVSNAVKAGQKKGASYDFAEIVKQETQAALERFEKEARATVVEGTAWSNYKQELKLYQKDLGEVSGQLRRDEMRRLATRVERWVKSRLSHSVSLEFNSLGSGRGGSGAPETGDKPAENKIWDRIWNLFVQTVLDAERRFTDRATSLDASVEEVDVGLWRLRRKSWSVLRLKIEEEMMEGNLLLKLRENFEDKFRYDEAGVPRIWRPTDDIEGVYTRARESTLTLIPLLSKFILAENNSPPPLDRWIGHTPSSATAADEEDLTPIGGVDAEDGRSLEEEMTILNDAKRQDLTVRFKKAADGVYVEAKRSAIGGITQVPLYFYGLLLALGWNEIWAVLRNPAYFFLLFVCAVGAYVTYQLNLWGPMLKMADAASKQALEELKKRLREFLEASDTGRQAMAMSANATGRDAGEEFEMSSLNRGGKKAEDEDENDDI.

At 1 to 762 the chain is on the cytoplasmic side; sequence MTDQRPRAES…KRSAIGGITQ (762 aa). One can recognise a GB1/RHD3-type G domain in the interval 68-307; the sequence is GFNYHLISVF…IESGVFLPEY (240 aa). GTP is bound at residue 78–85; the sequence is GSQSTGKS. The stretch at 463–517 forms a coiled coil; sequence YDFAEIVKQETQAALERFEKEARATVVEGTAWSNYKQELKLYQKDLGEVSGQLRR. A helical transmembrane segment spans residues 763 to 783; that stretch reads VPLYFYGLLLALGWNEIWAVL. Topologically, residues 784–786 are lumenal; the sequence is RNP. A helical transmembrane segment spans residues 787–807; the sequence is AYFFLLFVCAVGAYVTYQLNL. The Cytoplasmic portion of the chain corresponds to 808–880; the sequence is WGPMLKMADA…AEDEDENDDI (73 aa). Residues 812–839 are a coiled coil; sequence LKMADAASKQALEELKKRLREFLEASDT. Positions 846–880 are disordered; it reads MSANATGRDAGEEFEMSSLNRGGKKAEDEDENDDI.

It belongs to the TRAFAC class dynamin-like GTPase superfamily. GB1/RHD3 GTPase family. RHD3 subfamily.

The protein resides in the endoplasmic reticulum membrane. Cooperates with the reticulon proteins and tubule-shaping DP1 family proteins to generate and maintain the structure of the tubular endoplasmic reticulum network. Has GTPase activity, which is required for its function in ER organization. In Talaromyces stipitatus (strain ATCC 10500 / CBS 375.48 / QM 6759 / NRRL 1006) (Penicillium stipitatum), this protein is Protein sey1 (sey1).